The following is a 440-amino-acid chain: Chaperone SurA (440 aa).

Residues 1–25 (MGTKLSSRSPFSLPFLTLLAGMAIA) form the signal peptide. PpiC domains follow at residues 182–283 (SDEY…KLVE) and 294–392 (IDQT…QVIE).

It is found in the periplasm. It carries out the reaction [protein]-peptidylproline (omega=180) = [protein]-peptidylproline (omega=0). Functionally, chaperone involved in the correct folding and assembly of outer membrane proteins. Recognizes specific patterns of aromatic residues and the orientation of their side chains, which are found more frequently in integral outer membrane proteins. May act in both early periplasmic and late outer membrane-associated steps of protein maturation. This chain is Chaperone SurA, found in Nitrosospira multiformis (strain ATCC 25196 / NCIMB 11849 / C 71).